The sequence spans 186 residues: Peptidyl-tRNA hydrolase (186 aa).

Residue tyrosine 13 coordinates tRNA. The active-site Proton acceptor is histidine 18. TRNA is bound by residues tyrosine 59, asparagine 61, and asparagine 107.

The protein belongs to the PTH family. As to quaternary structure, monomer.

The protein resides in the cytoplasm. It carries out the reaction an N-acyl-L-alpha-aminoacyl-tRNA + H2O = an N-acyl-L-amino acid + a tRNA + H(+). Functionally, hydrolyzes ribosome-free peptidyl-tRNAs (with 1 or more amino acids incorporated), which drop off the ribosome during protein synthesis, or as a result of ribosome stalling. In terms of biological role, catalyzes the release of premature peptidyl moieties from peptidyl-tRNA molecules trapped in stalled 50S ribosomal subunits, and thus maintains levels of free tRNAs and 50S ribosomes. The protein is Peptidyl-tRNA hydrolase of Thermotoga petrophila (strain ATCC BAA-488 / DSM 13995 / JCM 10881 / RKU-1).